The primary structure comprises 247 residues: 3-deoxy-manno-octulosonate cytidylyltransferase (247 aa).

This sequence belongs to the KdsB family.

It is found in the cytoplasm. The enzyme catalyses 3-deoxy-alpha-D-manno-oct-2-ulosonate + CTP = CMP-3-deoxy-beta-D-manno-octulosonate + diphosphate. The protein operates within nucleotide-sugar biosynthesis; CMP-3-deoxy-D-manno-octulosonate biosynthesis; CMP-3-deoxy-D-manno-octulosonate from 3-deoxy-D-manno-octulosonate and CTP: step 1/1. It participates in bacterial outer membrane biogenesis; lipopolysaccharide biosynthesis. Functionally, activates KDO (a required 8-carbon sugar) for incorporation into bacterial lipopolysaccharide in Gram-negative bacteria. The polypeptide is 3-deoxy-manno-octulosonate cytidylyltransferase (Rhodopseudomonas palustris (strain BisA53)).